The following is a 369-amino-acid chain: Actin-related protein 2/3 complex subunit 1B-A (369 aa).

WD repeat units lie at residues F6 to I45, E50 to T89, R94 to K135, P140 to R179, S200 to S239, T242 to G282, and L321 to K364.

This sequence belongs to the WD repeat ARPC1 family. Component of the Arp2/3 complex composed of actr2/arp2, actr3/arp3, arpc1 (arpc1a or arpc1b), arpc2, arpc3, arpc4 and arpc5.

It is found in the cytoplasm. It localises to the cytoskeleton. Its subcellular location is the nucleus. Component of the Arp2/3 complex, a multiprotein complex that mediates actin polymerization upon stimulation by nucleation-promoting factor (NPF). The Arp2/3 complex mediates the formation of branched actin networks in the cytoplasm, providing the force for cell motility. In addition to its role in the cytoplasmic cytoskeleton, the Arp2/3 complex also promotes actin polymerization in the nucleus, thereby regulating gene transcription and repair of damaged DNA. The Arp2/3 complex promotes homologous recombination (HR) repair in response to DNA damage by promoting nuclear actin polymerization, leading to drive motility of double-strand breaks (DSBs). The sequence is that of Actin-related protein 2/3 complex subunit 1B-A (arpc1b-a) from Xenopus laevis (African clawed frog).